The following is a 210-amino-acid chain: Large ribosomal subunit protein uL3 (210 aa).

It belongs to the universal ribosomal protein uL3 family. Part of the 50S ribosomal subunit. Forms a cluster with proteins L14 and L19.

Its function is as follows. One of the primary rRNA binding proteins, it binds directly near the 3'-end of the 23S rRNA, where it nucleates assembly of the 50S subunit. This is Large ribosomal subunit protein uL3 from Amoebophilus asiaticus (strain 5a2).